A 367-amino-acid polypeptide reads, in one-letter code: Inositol-3-phosphate synthase (367 aa).

At S2 the chain carries N-acetylserine. An Isoglutamyl lysine isopeptide (Lys-Gln) (interchain with Q-Cter in protein Pup) cross-link involves residue K73. D78, A137, Y157, S200, D235, and K248 together coordinate NAD(+).

This sequence belongs to the myo-inositol 1-phosphate synthase family. It depends on NAD(+) as a cofactor. Pupylated at Lys-73 by the prokaryotic ubiquitin-like protein Pup, which leads to its degradation by the proteasome.

It carries out the reaction D-glucose 6-phosphate = 1D-myo-inositol 3-phosphate. Functionally, key enzyme in myo-inositol biosynthesis pathway that catalyzes the conversion of glucose 6-phosphate to 1D-myo-inositol 3-phosphate in a NAD-dependent manner. This is Inositol-3-phosphate synthase (ino1) from Mycobacterium tuberculosis (strain ATCC 25618 / H37Rv).